A 168-amino-acid chain; its full sequence is Oleosin 18.2 kDa (168 aa).

Position 2 is an N-acetylalanine (Ala2). Residues 2 to 45 (AEVRDRNLPHQVQVHPQYRLDNTTGGGYGAKNYHSGPSTSQVLA) are polar. The next 3 membrane-spanning stretches (helical) occupy residues 43-63 (VLAVLTLLPIGGTLLALAGLT), 76-96 (PLFIIFSPVLVPAAIAIAMAV), and 97-117 (TGFLSSGAFGLTGLSSLSYVL). Residues 46-117 (VLTLLPIGGT…TGLSSLSYVL (72 aa)) are hydrophobic.

This sequence belongs to the oleosin family.

The protein resides in the lipid droplet. The protein localises to the membrane. Its function is as follows. May have a structural role to stabilize the lipid body during desiccation of the seed by preventing coalescence of the oil. Probably interacts with both lipid and phospholipid moieties of lipid bodies. May also provide recognition signals for specific lipase anchorage in lipolysis during seedling growth. The polypeptide is Oleosin 18.2 kDa (MATP6-A) (Gossypium hirsutum (Upland cotton)).